The sequence spans 156 residues: Ribonuclease 7 (156 aa).

An N-terminal signal peptide occupies residues 1 to 28; it reads MAPARAGFCPLLLLLLLGLWVAEIPVSA. The tract at residues 29–32 is important for antibacterial activity; sequence KPKG. The active-site Proton acceptor is His-43. DUMP contacts are provided by His-43, Lys-66, Asn-69, and Thr-70. Intrachain disulfides connect Cys-51-Cys-109, Cys-65-Cys-119, Cys-83-Cys-134, and Cys-90-Cys-97. Asn-127 is a glycosylation site (N-linked (GlcNAc...) asparagine). The segment at 139-140 is important for antibacterial activity; it reads KK. Residues His-151 and Arg-154 each contribute to the dUMP site. His-151 (proton donor) is an active-site residue.

Expressed in collecting ducts in kidney, and in apical uroepithelium in bladder (at protein level). Expressed in various epithelial tissues including skin, respiratory tract, genito-urinary tract and, at a low level, in the gut. Expressed in liver, kidney, skeletal muscle and heart.

Its subcellular location is the secreted. Exhibits a potent RNase activity. Has broad-spectrum antimicrobial activity against many pathogenic microorganisms including uropathogenic E.coli (UPEC), and remarkably potent activity (lethal dose of 90% &lt; 30 nM) against a vancomycin resistant Enterococcus faecium. Causes loss of bacterial membrane integrity. Probably contributes to urinary tract sterility. Bactericidal activity is independent of RNase activity. This Homo sapiens (Human) protein is Ribonuclease 7 (RNASE7).